The following is a 279-amino-acid chain: Undecaprenyl-diphosphatase (279 aa).

8 consecutive transmembrane segments (helical) span residues 2–22 (LIIELLKAIFFGIIEGITEWL), 44–64 (AFIEMFNIVIQLGAIIAVMLI), 85–105 (WQLWLKVVIACIPSILIAVPL), 113–133 (FYFMVPIAIALIVYGIAFIWI), 163–183 (VLSIVPGTSRSGATILGAIIL), 188–208 (TVAADFTFFLAIPTMFGYSGL), 223–243 (AQVLILLVASLTAFVVSLLAI), and 255–275 (FTIFGKYRIVLGSLLLIYSFF).

Belongs to the UppP family.

The protein localises to the cell membrane. It carries out the reaction di-trans,octa-cis-undecaprenyl diphosphate + H2O = di-trans,octa-cis-undecaprenyl phosphate + phosphate + H(+). Its function is as follows. Catalyzes the dephosphorylation of undecaprenyl diphosphate (UPP). Confers resistance to bacitracin. This is Undecaprenyl-diphosphatase from Streptococcus pyogenes serotype M5 (strain Manfredo).